We begin with the raw amino-acid sequence, 665 residues long: Transketolase 1 (665 aa).

Histidine 26 contributes to the substrate binding site. Thiamine diphosphate-binding positions include histidine 66 and 114–116 (GPL). Aspartate 155 contacts Mg(2+). 2 residues coordinate thiamine diphosphate: glycine 156 and asparagine 185. Mg(2+)-binding residues include asparagine 185 and isoleucine 187. 3 residues coordinate substrate: histidine 261, arginine 358, and serine 385. Residue histidine 261 participates in thiamine diphosphate binding. Glutamate 412 acts as the Proton donor in catalysis. Residue phenylalanine 438 coordinates thiamine diphosphate. Substrate contacts are provided by histidine 462, aspartate 470, and arginine 521.

The protein belongs to the transketolase family. Homodimer. Mg(2+) is required as a cofactor. Ca(2+) serves as cofactor. It depends on Mn(2+) as a cofactor. The cofactor is Co(2+). Requires thiamine diphosphate as cofactor.

The catalysed reaction is D-sedoheptulose 7-phosphate + D-glyceraldehyde 3-phosphate = aldehydo-D-ribose 5-phosphate + D-xylulose 5-phosphate. In terms of biological role, catalyzes the transfer of a two-carbon ketol group from a ketose donor to an aldose acceptor, via a covalent intermediate with the cofactor thiamine pyrophosphate. The sequence is that of Transketolase 1 (tkt1) from Vibrio cholerae serotype O1 (strain ATCC 39315 / El Tor Inaba N16961).